The following is a 550-amino-acid chain: Leucine-rich repeat, immunoglobulin-like domain and transmembrane domain-containing protein 2 (550 aa).

A signal peptide spans 1-19 (MASVFHYFLLVLVFLDTHA). Residues 23–54 (FCLPGCTCSEESFGRTLQCTSVSLGKIPGNLS) enclose the LRRNT domain. N-linked (GlcNAc...) asparagine glycosylation occurs at Asn-52. LRR repeat units follow at residues 80-103 (TLEY…EHLP), 104-125 (ELRE…AFRA), 128-149 (LLRV…ALQF), and 152-173 (SLTY…VFLN). Positions 200–252 (NPWVCDCRLRGLVQFVKSITLPVILVNSYLICQGPLSKAGQLFHETELSACMK) constitute an LRRCT domain. The Ig-like domain maps to 253-341 (PQISTPSANI…SIGKSNLVIS (89 aa)). A disulfide bond links Cys-274 and Cys-327. In terms of domain architecture, Fibronectin type-III spans 361–451 (EGNAYIDLRV…QGQCVAFVTG (91 aa)). A helical transmembrane segment spans residues 466 to 486 (VTVVLCVVLLAVPVGAYAWAA). Residues 508–550 (SCTPAAPQSKDGSFREHPAVCDDGEGHIDTEGDKEKGGTEDNS) are disordered. The segment covering 519–550 (GSFREHPAVCDDGEGHIDTEGDKEKGGTEDNS) has biased composition (basic and acidic residues).

Interacts with LRIT1; may form a heterodimer with LRIT1.

It is found in the membrane. This is Leucine-rich repeat, immunoglobulin-like domain and transmembrane domain-containing protein 2 (LRIT2) from Homo sapiens (Human).